Reading from the N-terminus, the 100-residue chain is NADH-quinone oxidoreductase subunit K (100 aa).

3 helical membrane-spanning segments follow: residues 4-24 (FEYYVALSGLLMVLGFIGVII), 28-48 (IIAMLLSTELMLNAVNIAFVA), and 61-81 (FVFFILTIAAAEAAIGLGLII).

Belongs to the complex I subunit 4L family. As to quaternary structure, NDH-1 is composed of 14 different subunits. Subunits NuoA, H, J, K, L, M, N constitute the membrane sector of the complex.

The protein resides in the cell inner membrane. The enzyme catalyses a quinone + NADH + 5 H(+)(in) = a quinol + NAD(+) + 4 H(+)(out). Its function is as follows. NDH-1 shuttles electrons from NADH, via FMN and iron-sulfur (Fe-S) centers, to quinones in the respiratory chain. The immediate electron acceptor for the enzyme in this species is believed to be ubiquinone. Couples the redox reaction to proton translocation (for every two electrons transferred, four hydrogen ions are translocated across the cytoplasmic membrane), and thus conserves the redox energy in a proton gradient. The protein is NADH-quinone oxidoreductase subunit K of Sulfurihydrogenibium sp. (strain YO3AOP1).